A 63-amino-acid chain; its full sequence is Light-harvesting protein B-800/850 alpha chain (63 aa).

The Cytoplasmic segment spans residues 1 to 14 (MNNAKMWLVVKPTV). Residues 15–35 (GIPLFLVACAIASFLVHLMLV) form a helical membrane-spanning segment. Residue histidine 31 coordinates a bacteriochlorophyll. The Periplasmic portion of the chain corresponds to 36 to 63 (LTTGWMGDYYSGSFEAASLVSNATTLLS).

Belongs to the antenna complex alpha subunit family. In terms of assembly, the core complex is formed by different alpha and beta chains, binding bacteriochlorophyll molecules, and arranged most probably in tetrameric structures disposed around the reaction center. The non-pigmented gamma chains may constitute additional components.

Its subcellular location is the cell inner membrane. Functionally, antenna complexes are light-harvesting systems, which transfer the excitation energy to the reaction centers. In Rhodovulum sulfidophilum (Rhodobacter sulfidophilus), this protein is Light-harvesting protein B-800/850 alpha chain (pucA).